Reading from the N-terminus, the 2063-residue chain is Nuclear receptor coactivator 6 (2063 aa).

The interval 1–928 is TBP/GTF2A-binding region; it reads MVLDDLPNLE…PPRKKKNSQQ (928 aa). The segment at 1 to 1057 is CREBBP-binding region; that stretch reads MVLDDLPNLE…LPVSQNVHPP (1057 aa). Positions 1–1310 are NCOA1-binding region; it reads MVLDDLPNLE…QTHKLDSVVV (1310 aa). Arginine 95 bears the Asymmetric dimethylarginine mark. 3 disordered regions span residues 184 to 251, 281 to 549, and 789 to 811; these read IPPG…VNRQ, QQQQ…APQL, and RPPG…ANND. Residues 281-300 show a composition bias toward low complexity; sequence QQQQQLQARPPQQHQQQQPQ. Composition is skewed to polar residues over residues 353-368, 379-406, 417-453, 462-502, and 522-549; these read MQQQ…TVQT, GSQQ…QMKS, PLQQ…QQQM, PLPQ…QGPQ, and GQAN…APQL. Residues 773–927 form an NCOA6IP-binding region region; sequence VNNSPSQVMG…KPPRKKKNSQ (155 aa). Serine 884 is subject to Phosphoserine; by MAPK; in vitro. An LXXLL motif 1 motif is present at residues 887-891; that stretch reads LVNLL. Disordered regions lie at residues 899–1278, 1310–1353, and 1448–1474; these read HFGV…LNPT, VNSG…KAPK, and EVKM…PSVE. Positions 903–912 are enriched in low complexity; that stretch reads NNKQNNTNAN. Over residues 913–925 the composition is skewed to basic residues; it reads KPKKKKPPRKKKN. The segment covering 982-992 has biased composition (low complexity); the sequence is PLQQMPPQLMQ. Pro residues predominate over residues 995-1020; it reads APPPQPPQQQPQPQLPQQQQPPPPSQ. Low complexity predominate over residues 1021-1041; it reads PQSQQQQQQQQQMMMMLMMQQ. Residues arginine 1047 and arginine 1058 each carry the asymmetric dimethylarginine modification. Over residues 1063–1075 the composition is skewed to polar residues; the sequence is PDSQRMPMQQSGS. Arginine 1096 is modified (asymmetric dimethylarginine). 3 stretches are compositionally biased toward polar residues: residues 1104 to 1125, 1173 to 1191, and 1202 to 1214; these read PLGS…SSSP, LSAT…SLPS, and APTQ…TPNR. Over residues 1219–1232 the composition is skewed to pro residues; the sequence is PYYPQTPNNRPPST. The segment covering 1310 to 1320 has biased composition (polar residues); that stretch reads VNSGKQSNSGA. Over residues 1322-1345 the composition is skewed to low complexity; that stretch reads KRASPSNSRRSSPGSSRKTTPSPG. The LXXLL motif 2 signature appears at 1491 to 1495; sequence LSQLL. An EP300/CRSP3-binding region region spans residues 1641 to 2063; it reads SEGQSAAQSN…AVQSKRRKSK (423 aa). The tract at residues 1738-1820 is disordered; that stretch reads ATPVQLPSPP…VSSSKGKGKV (83 aa). Residues 1750-1763 are compositionally biased toward low complexity; it reads SSPVVPSHPPVQQV. Positions 1773–1798 are enriched in polar residues; it reads PQVNTSADQNTLPSSQSTTMVSPLLT. Positions 1799–1815 are enriched in low complexity; it reads NSPGSSGNRRSPVSSSK. Residues lysine 1819 and lysine 1822 each carry the N6-acetyllysine modification. 2 disordered regions span residues 1837 to 1908 and 1995 to 2063; these read GSLE…LPGG and IVSG…RKSK. Basic and acidic residues predominate over residues 2002-2011; that stretch reads EPKEIVEKSK. Position 2018 is a phosphoserine (serine 2018).

In terms of assembly, monomer and homodimer. Interacts with RBM39. Interacts in vitro with the basal transcription factors GTF2A and TBP, suggesting an autonomous transactivation function. Interacts with NCOA1, CRSP3, RBM14, the histone acetyltransferases EP300 and CREBBP, and with the methyltransferases NCOA6IP and PRMT2/HRMT1L1. Component of the MLL2/3 complex (also named ASCOM complex), at least composed of KMT2D/MLL2 or KMT2C/MLL3, ASH2L, RBBP5, WDR5, NCOA6, DPY30, KDM6A, PAXIP1/PTIP, PAGR1 and alpha- and beta-tubulin. Interacts with ZNF335; may enhance ligand-dependent transcriptional activation by nuclear hormone receptors. Post-translationally, phosphorylated by PRKDC. In terms of processing, phosphorylation on Ser-884 leads to a strong decrease in binding to ESR1 and ESR2. In terms of tissue distribution, ubiquitous. Highly expressed in brain, prostate, testis and ovary; weakly expressed in lung, thymus and small intestine.

It localises to the nucleus. Nuclear receptor coactivator that directly binds nuclear receptors and stimulates the transcriptional activities in a hormone-dependent fashion. Coactivates expression in an agonist- and AF2-dependent manner. Involved in the coactivation of different nuclear receptors, such as for steroids (GR and ERs), retinoids (RARs and RXRs), thyroid hormone (TRs), vitamin D3 (VDR) and prostanoids (PPARs). Probably functions as a general coactivator, rather than just a nuclear receptor coactivator. May also be involved in the coactivation of the NF-kappa-B pathway. May coactivate expression via a remodeling of chromatin and its interaction with histone acetyltransferase proteins. In Homo sapiens (Human), this protein is Nuclear receptor coactivator 6 (NCOA6).